We begin with the raw amino-acid sequence, 116 residues long: Large ribosomal subunit protein uL18 (116 aa).

Belongs to the universal ribosomal protein uL18 family. In terms of assembly, part of the 50S ribosomal subunit; part of the 5S rRNA/L5/L18/L25 subcomplex. Contacts the 5S and 23S rRNAs.

This is one of the proteins that bind and probably mediate the attachment of the 5S RNA into the large ribosomal subunit, where it forms part of the central protuberance. The protein is Large ribosomal subunit protein uL18 of Marinomonas sp. (strain MWYL1).